The chain runs to 74 residues: Brevinin-2Ef (74 aa).

Positions 1–22 (MFTMKKSLLLIFFLGTISLSLC) are cleaved as a signal peptide. Positions 23 to 41 (QEERNADDDDGEMTEEEKR) are excised as a propeptide. Residues Cys68 and Cys74 are joined by a disulfide bond.

Belongs to the frog skin active peptide (FSAP) family. Brevinin subfamily. As to expression, expressed by the skin glands.

It localises to the secreted. In terms of biological role, shows antibacterial activity against representative Gram-negative and Gram-positive bacterial species, and hemolytic activity. This Pelophylax lessonae (Pool frog) protein is Brevinin-2Ef.